Consider the following 146-residue polypeptide: Snaclec agkicetin-C subunit beta (146 aa).

Residues 1–23 form the signal peptide; that stretch reads MGRFIFVSFGLLVVFLSLSGTGA. Intrachain disulfides connect Cys25/Cys36, Cys53/Cys142, and Cys119/Cys134. The region spanning 32–143 is the C-type lectin domain; it reads YEGNCYLVVK…CSRTQPFVCK (112 aa).

This sequence belongs to the snaclec family. As to quaternary structure, heterodimer of subunits alpha and beta; disulfide-linked. Expressed by the venom gland.

Its subcellular location is the secreted. Its function is as follows. Is a potent glycoprotein Ibalpha (GP1BA) antagonist. Concentration-dependently inhibits botrocetin-, ristocetin- and low dose thrombin-induced platelet aggregation. Inhibits platelet adhesion only through inhibiting the vWF interaction with GP1BA, but has minimal effect on other platelet receptors, such as alpha-IIb/beta-3 (ITGA2B/ITGB3) or alpha-2/beta-1 (ITGA2/ITGB1). Causes an instant severe thrombocytopenia in rats and is not lethal to mice. The sequence is that of Snaclec agkicetin-C subunit beta from Deinagkistrodon acutus (Hundred-pace snake).